A 486-amino-acid polypeptide reads, in one-letter code: Protein ZINC INDUCED FACILITATOR 1 (486 aa).

The next 12 helical transmembrane spans lie at 41–61, 82–102, 109–129, 131–151, 170–190, 212–232, 288–308, 327–347, 362–384, 391–408, 423–443, and 461–481; these read FVWI…PFLY, FVGC…GIVA, PIIL…GLSS, FWMA…LGTM, AVST…GFLA, ALPC…CCFI, IIVY…FALW, TVLA…YPLA, ALMI…SLSL, ILIN…LILQ, IAMT…GILF, and VFFV…KPFL.

The protein belongs to the major facilitator superfamily. In terms of tissue distribution, strongly expressed in developing leaves, differentiating zones of root tips and sepals of developing flowers. Restricted to vascular tissues in older leaves, mature roots, flowers, anthers and filaments. Not expressed in developing anthers.

It localises to the vacuole membrane. Major facilitator superfamily (MFS) transporter involved in zinc tolerance by participating in vacuolar sequestration of zinc. The polypeptide is Protein ZINC INDUCED FACILITATOR 1 (ZIF1) (Arabidopsis thaliana (Mouse-ear cress)).